The sequence spans 168 residues: ATP synthase subunit b (168 aa).

The chain crosses the membrane as a helical span at residues Asn11–Leu31.

Belongs to the ATPase B chain family. In terms of assembly, F-type ATPases have 2 components, F(1) - the catalytic core - and F(0) - the membrane proton channel. F(1) has five subunits: alpha(3), beta(3), gamma(1), delta(1), epsilon(1). F(0) has three main subunits: a(1), b(2) and c(10-14). The alpha and beta chains form an alternating ring which encloses part of the gamma chain. F(1) is attached to F(0) by a central stalk formed by the gamma and epsilon chains, while a peripheral stalk is formed by the delta and b chains.

Its subcellular location is the cell membrane. Its function is as follows. F(1)F(0) ATP synthase produces ATP from ADP in the presence of a proton or sodium gradient. F-type ATPases consist of two structural domains, F(1) containing the extramembraneous catalytic core and F(0) containing the membrane proton channel, linked together by a central stalk and a peripheral stalk. During catalysis, ATP synthesis in the catalytic domain of F(1) is coupled via a rotary mechanism of the central stalk subunits to proton translocation. Component of the F(0) channel, it forms part of the peripheral stalk, linking F(1) to F(0). This is ATP synthase subunit b from Lactococcus lactis subsp. lactis (strain IL1403) (Streptococcus lactis).